Here is a 334-residue protein sequence, read N- to C-terminus: Putative fatty acid elongase 1 (334 aa).

Residues 1-51 (MDLTGAHMLKIHRPSIDHPFGVDLWHLFEQLSIKTIGWNPSEFEYIPGKTP) lie on the Lumenal side of the membrane. Residues 52-72 (MSQWSSVIVSITAYYVIILSG) form a helical membrane-spanning segment. Over 73–86 (RAIMTNRKPLKQRR) the chain is Cytoplasmic. Residues 87–107 (LFQLHNFILTIISGALLALLV) form a helical membrane-spanning segment. Over 108 to 135 (EEVFRNYMRNGLFYCVCDSRHFTQRLVT) the chain is Lumenal. The helical transmembrane segment at 136 to 156 (LYYLNYLTKYLELMDTVFLFL) threads the bilayer. At 157–160 (KKKP) the chain is on the cytoplasmic side. A helical membrane pass occupies residues 161–181 (LAFLHCYHHGITALLCFTQLL). Residues 182–187 (GRTSVQ) are Lumenal-facing. The chain crosses the membrane as a helical span at residues 188-208 (WGVIGLNLYVHVIMYSYYFLA). Residues 209 to 224 (ACGRRVWWKQWVTRVQ) lie on the Cytoplasmic side of the membrane. The chain crosses the membrane as a helical span at residues 225 to 245 (IIQFVLDLILCYFGTYSHIAF). The Lumenal portion of the chain corresponds to 246–260 (RYFPWLPHVGDCSGS). A helical transmembrane segment spans residues 261–281 (LFAAFFGCGVLSSYLFLFIGF). At 282–334 (YINTYIKRGAKKNQRKAAGKADNTSVAAAAGSEALAATTATNASPFSARSRKL) the chain is on the cytoplasmic side. Position 325 is a phosphoserine (Ser325).

The protein belongs to the ELO family.

The protein localises to the endoplasmic reticulum membrane. It carries out the reaction a very-long-chain acyl-CoA + malonyl-CoA + H(+) = a very-long-chain 3-oxoacyl-CoA + CO2 + CoA. In terms of biological role, may be involved in the synthesis of very long chain fatty acids. The chain is Putative fatty acid elongase 1 from Schizosaccharomyces pombe (strain 972 / ATCC 24843) (Fission yeast).